A 347-amino-acid chain; its full sequence is Fatty acid elongase 2 (347 aa).

At 1–62 the chain is on the lumenal side; sequence MNSLVTQYAA…PSEFQFIAGE (62 aa). N-linked (GlcNAc...) asparagine glycosylation is present at Asn32. A helical membrane pass occupies residues 63–83; sequence LPLSTLPPVLYAITAYYVIIF. Topologically, residues 84-96 are cytoplasmic; it reads GGRFLLSKSKPFK. The helical transmembrane segment at 97-119 threads the bilayer; sequence LNGLFQLHNLVLTSLSLTLLLLM. Over 120 to 122 the chain is Lumenal; sequence VEQ. Residues 123 to 142 traverse the membrane as a helical segment; that stretch reads LVPIIVQHGLYFAICNIGAW. Residues 143-146 lie on the Cytoplasmic side of the membrane; it reads TQPL. A helical transmembrane segment spans residues 147 to 169; the sequence is VTLYYMNYIVKFIEFIDTFFLVL. At 170 to 200 the chain is on the lumenal side; the sequence is KHKKLTFLHTYHHGATALLCYTQLMGTTSIS. The short motif at 178–182 is the HxxHH motif element; it reads HTYHH. A helical transmembrane segment spans residues 201–221; sequence WVPISLNLGVHVVMYWYYFLA. The Cytoplasmic segment spans residues 222–231; sequence ARGIRVWWKE. The helical transmembrane segment at 232 to 254 threads the bilayer; it reads WVTRFQIIQFVLDIGFIYFAVYQ. Topologically, residues 255–275 are lumenal; sequence KAVHLYFPILPHCGDCVGSTT. The chain crosses the membrane as a helical span at residues 276 to 296; it reads ATFAGCAIISSYLVLFISFYI. At 297–347 the chain is on the cytoplasmic side; it reads NVYKRKGTKTSRVVKRAHGGVAAKVNEYVNVDLKNVPTPSPSPKPQHRRKR. Thr334 is subject to Phosphothreonine. Ser336 and Ser338 each carry phosphoserine. The short motif at 344 to 347 is the Di-lysine-like motif element; that stretch reads RRKR.

The protein belongs to the ELO family.

It is found in the endoplasmic reticulum membrane. It carries out the reaction a very-long-chain acyl-CoA + malonyl-CoA + H(+) = a very-long-chain 3-oxoacyl-CoA + CO2 + CoA. The enzyme catalyses octadecanoyl-CoA + malonyl-CoA + H(+) = 3-oxoeicosanoyl-CoA + CO2 + CoA. It catalyses the reaction hexadecanoyl-CoA + malonyl-CoA + H(+) = 3-oxooctadecanoyl-CoA + CO2 + CoA. The catalysed reaction is eicosanoyl-CoA + malonyl-CoA + H(+) = 3-oxodocosanoyl-CoA + CO2 + CoA. It carries out the reaction docosanoyl-CoA + malonyl-CoA + H(+) = 3-oxotetracosanoyl-CoA + CO2 + CoA. Component of a microsomal membrane-bound long-chain fatty acid elongation system, which produces the 20-26-carbon very long-chain fatty acids (VLCFA) from long-chain fatty acid precursors and is involved ceramide and inositol sphingolipid biosynthesis. Component of elongase II, which elongates 16-18 carbon fatty acyl-CoAs such as palmitoyl-CoA and stearoyl-CoA to 20-22-carbon fatty acids by incorporation of malonyl-CoA. Involved in the synthesis of 1,3-beta-glucan. The enzymes active site faces the cytosol, whereas VLCFA length is determined by a lysine near the luminal end of transmembrane helix 6. Plays an important role in lipotoxic cell death induced by oleic acid through maintaining a balanced fatty acid composition in thr plasma membrane. This is Fatty acid elongase 2 from Saccharomyces cerevisiae (strain ATCC 204508 / S288c) (Baker's yeast).